Reading from the N-terminus, the 365-residue chain is MQVKEQLRGLPPYQPGKSIEEVKQEYGLSEIIKLASNENPYGSSPTVKSAIAAELDRLAVYPDGYARALREKVANHLGVKETQLLFGNGSDEVVQIFCRAFLEPGTNTVMATPTFPQYRHNAIIERAEVREVPLVDGRHDLEAMLKEIDENTRIVWVCNPNNPTGTYVNETELRAFLDRVPSHVLVVLDEAYYEYVTADDYPQTVPLLQEYEQLVIMRTFSKAYGLAALRVGYGIASESLIRAVEPAREPFNTSTIAQAAAAVALDDQAFIRACVEQNRAELERYYRFCEEHGLKYYPSQTNFLFIDFGMDGNEVFQYLLERGIIVRSGKALGLPTGVRITVGTKEQNDRVFETISHMLREKQLT.

Lysine 222 carries the N6-(pyridoxal phosphate)lysine modification.

This sequence belongs to the class-II pyridoxal-phosphate-dependent aminotransferase family. Histidinol-phosphate aminotransferase subfamily. As to quaternary structure, homodimer. Requires pyridoxal 5'-phosphate as cofactor.

The enzyme catalyses L-histidinol phosphate + 2-oxoglutarate = 3-(imidazol-4-yl)-2-oxopropyl phosphate + L-glutamate. It functions in the pathway amino-acid biosynthesis; L-histidine biosynthesis; L-histidine from 5-phospho-alpha-D-ribose 1-diphosphate: step 7/9. The chain is Histidinol-phosphate aminotransferase from Geobacillus thermodenitrificans (strain NG80-2).